The primary structure comprises 511 residues: 2-isopropylmalate synthase (511 aa).

The 263-residue stretch at 5–267 (LIVFDTTLRD…DTRIDATQIV (263 aa)) folds into the Pyruvate carboxyltransferase domain. Residues Asp14, His202, His204, and Asn238 each contribute to the Mn(2+) site. The tract at residues 393 to 511 (RLVASRFHSE…SKLERLNPQL (119 aa)) is regulatory domain.

Belongs to the alpha-IPM synthase/homocitrate synthase family. LeuA type 1 subfamily. Homodimer. It depends on Mn(2+) as a cofactor.

It localises to the cytoplasm. It carries out the reaction 3-methyl-2-oxobutanoate + acetyl-CoA + H2O = (2S)-2-isopropylmalate + CoA + H(+). Its pathway is amino-acid biosynthesis; L-leucine biosynthesis; L-leucine from 3-methyl-2-oxobutanoate: step 1/4. In terms of biological role, catalyzes the condensation of the acetyl group of acetyl-CoA with 3-methyl-2-oxobutanoate (2-ketoisovalerate) to form 3-carboxy-3-hydroxy-4-methylpentanoate (2-isopropylmalate). This is 2-isopropylmalate synthase from Aromatoleum aromaticum (strain DSM 19018 / LMG 30748 / EbN1) (Azoarcus sp. (strain EbN1)).